The primary structure comprises 131 residues: GATA zinc finger domain-containing protein 2 (131 aa).

A compositionally biased stretch (low complexity) spans 21–55; it reads STATDATSADGAASETDAASATDTTSATDPTSATD. The tract at residues 21–85 is disordered; the sequence is STATDATSAD…RGRPYISTPP (65 aa). The segment covering 57-74 has biased composition (polar residues); that stretch reads IATTNTTGITSSGPTTNG. The GATA-type zinc finger occupies 88 to 115; the sequence is CYDCGRTRSPYWRKGTYNGQVVHLCNAC.

The chain is GATA zinc finger domain-containing protein 2 (comH) from Dictyostelium discoideum (Social amoeba).